Here is a 263-residue protein sequence, read N- to C-terminus: Small ribosomal subunit protein eS4, X isoform (263 aa).

The region spanning 42–104 (LPLIIFLRNR…TGEHFRLVYD (63 aa)) is the S4 RNA-binding domain. Lysine 230 is covalently cross-linked (Glycyl lysine isopeptide (Lys-Gly) (interchain with G-Cter in SUMO2)). N6-acetyllysine is present on lysine 233.

The protein belongs to the eukaryotic ribosomal protein eS4 family. Component of the small ribosomal subunit. Part of the small subunit (SSU) processome, composed of more than 70 proteins and the RNA chaperone small nucleolar RNA (snoRNA) U3. Identified in a IGF2BP1-dependent mRNP granule complex containing untranslated mRNAs.

Its subcellular location is the cytoplasm. It is found in the nucleus. The protein localises to the nucleolus. Functionally, component of the small ribosomal subunit. The ribosome is a large ribonucleoprotein complex responsible for the synthesis of proteins in the cell. Part of the small subunit (SSU) processome, first precursor of the small eukaryotic ribosomal subunit. During the assembly of the SSU processome in the nucleolus, many ribosome biogenesis factors, an RNA chaperone and ribosomal proteins associate with the nascent pre-rRNA and work in concert to generate RNA folding, modifications, rearrangements and cleavage as well as targeted degradation of pre-ribosomal RNA by the RNA exosome. The sequence is that of Small ribosomal subunit protein eS4, X isoform (RPS4X) from Monodelphis domestica (Gray short-tailed opossum).